A 193-amino-acid polypeptide reads, in one-letter code: Superoxide dismutase [Fe] (193 aa).

Fe cation-binding residues include His-27, His-75, Asp-159, and His-163.

It belongs to the iron/manganese superoxide dismutase family. In terms of assembly, homodimer. Fe cation is required as a cofactor.

The enzyme catalyses 2 superoxide + 2 H(+) = H2O2 + O2. Destroys superoxide anion radicals which are normally produced within the cells and which are toxic to biological systems. The protein is Superoxide dismutase [Fe] (sodB) of Bacteroides fragilis (strain YCH46).